Consider the following 523-residue polypeptide: Cytochrome P450 52A3-B (523 aa).

A helical membrane pass occupies residues 17–34 (WYTILFGAAFTYFLSIAL). Residue Cys-471 participates in heme binding.

Belongs to the cytochrome P450 family. Heme serves as cofactor.

The protein localises to the membrane. Its function is as follows. Together with an NADPH cytochrome P450 the enzyme system catalyzes the terminal hydroxylation as the first step in the assimilation of alkanes and fatty acids. In Candida maltosa (Yeast), this protein is Cytochrome P450 52A3-B (CYP52A3-B).